Consider the following 134-residue polypeptide: uncharacterized protein (134 aa).

This is an uncharacterized protein from Homo sapiens (Human).